Consider the following 454-residue polypeptide: Argininosuccinate synthase (454 aa).

ATP-binding positions include Ala-17 to Ser-25 and Ala-43. L-citrulline is bound at residue Tyr-99. Residues Gly-129 and Thr-131 each coordinate ATP. Residues Thr-131, Asn-135, and Asp-136 each coordinate L-aspartate. Asn-135 is a binding site for L-citrulline. Asp-136 contributes to the ATP binding site. Positions 139 and 192 each coordinate L-citrulline. Asp-194 contacts ATP. Thr-201, Glu-203, and Glu-280 together coordinate L-citrulline.

The protein belongs to the argininosuccinate synthase family. Type 2 subfamily. Homotetramer.

It localises to the cytoplasm. The catalysed reaction is L-citrulline + L-aspartate + ATP = 2-(N(omega)-L-arginino)succinate + AMP + diphosphate + H(+). It participates in amino-acid biosynthesis; L-arginine biosynthesis; L-arginine from L-ornithine and carbamoyl phosphate: step 2/3. The polypeptide is Argininosuccinate synthase (Yersinia enterocolitica serotype O:8 / biotype 1B (strain NCTC 13174 / 8081)).